Consider the following 506-residue polypeptide: MEDHQHVPIDIQTSKLLDWLVDRRHCSLKWQSLVLTIREKINAAIQDMPESEEIAQLLSGSYIHYFHCLRILDLLKGTEASTKNIFGRYSSQRMKDWQEIIALYEKDNTYLVELSSLLVRNVNYEIPSLKKQIAKCQQLQQEYSRKEEECQAGAAEMREQFYHSCKQYGITGENVRGELLALVKDLPSQLAETGAAARQSLGEAIDVYQASVGFVCESHTEQVLPMLQFVQKRGNSTVYEWRTGTEPSVVERPHLEELPEQVAEDAIDWGDFGVEAVSEGTDSGISAKAAGIDWGIFPESDSKDPGGDGIDWGDDAVALQITVLEAGTQAPEGVARGPDALTLLEYTETRNQFLDELMELEIFLARRAVELSEEADVLSVSQFQLAPAILQGQTKEKTVTMVSVLEDLIGKLTSLQLQHLFMILASPRYVDRVTEFLQQKLKQSQLLALKKELMVQKQQEALEEQAALEPKLDLLLEKTKELQKLIEADISKRYSGRPVNLMGTSL.

3 consecutive short sequence motifs (shuffled ATG8-binding motif) follow at residues 267-270 (IDWG), 292-295 (IDWG), and 310-313 (IDWG). The required for interaction with UFL1 and mediates interaction with CHEK1 stretch occupies residues 269 to 506 (WGDFGVEAVS…RPVNLMGTSL (238 aa)). The segment at 355–370 (DELMELEIFLARRAVE) is RPL10a-binding domain (RBD). Residue Lys-450 forms a Glycyl lysine isopeptide (Lys-Gly) (interchain with G-Cter in SUMO2) linkage.

The protein belongs to the CDK5RAP3 family. Substrate adapter component of the UFM1 ribosome E3 ligase (UREL) complex, composed of UFL1, DDRGK1 and CDK5RAP3. Interaction with UFL1 anchors CDK5RAP3 in the cytoplasm, preventing its translocation to the nucleus which allows expression of the CCND1 cyclin and progression of cells through the G1/S transition. Interacts with ATG8 family proteins MAP1LC3A, MAP1LC3B, GABARAP, GABARAPL1 and GABARAPL2. Interacts with CDK5R1; competes with CDK5RAP1 and CDK5RAP2. Interacts with RELA. Interacts with CHEK1; may negatively regulate CHEK1 and thereby stimulate entry into mitosis. Interacts with CDKN2A/ARF and MDM2; forms a ternary complex involved in regulation of p53/TP53. Interacts with MAPK14. Interacts with CCNB1. Interacts with TUBG1; may regulate CDK5RAP3 in mitotic G2/M transition checkpoint. May be phosphorylated by CDK5. Post-translationally, ubiquitinated. Probably triggers proteasomal degradation and is negatively regulated by UFL1. In terms of processing, may be ufmylated. Cleaved by caspases early during apoptosis, the resulting peptides may play a role in rupture of the nuclear envelope.

The protein localises to the endoplasmic reticulum membrane. Its subcellular location is the cytoplasm. The protein resides in the nucleus. It localises to the cytoskeleton. It is found in the microtubule organizing center. The protein localises to the centrosome. Functionally, substrate adapter of E3 ligase complexes mediating ufmylation, the covalent attachment of the ubiquitin-like modifier UFM1 to substrate proteins, and which is involved in various processes, such as ribosome recycling and reticulophagy (also called ER-phagy). As part of the UREL complex, plays a key role in ribosome recycling by promoting mono-ufmylation of RPL26/uL24 subunit of the 60S ribosome. Ufmylation of RPL26/uL24 occurs on free 60S ribosomes following ribosome dissociation: it weakens the junction between post-termination 60S subunits and SEC61 translocons, promoting release and recycling of the large ribosomal subunit from the endoplasmic reticulum membrane. Ufmylation of RPL26/uL24 and subsequent 60S ribosome recycling either take place after normal termination of translation or after ribosome stalling during cotranslational translocation at the endoplasmic reticulum. Within the UREL complex, CDK5RAP3 acts as a substrate adapter that constrains UFL1 ligase activity to mono-ufmylate RPL26/uL24 at 'Lys-134'. The UREL complex is also involved in reticulophagy in response to endoplasmic reticulum stress by promoting ufmylation of proteins such as CYB5R3, thereby promoting lysosomal degradation of ufmylated proteins. Also acts as a regulator of transcription: negatively regulates NF-kappa-B-mediated gene transcription through the control of RELA phosphorylation. Also regulates mitotic G2/M transition checkpoint and mitotic G2 DNA damage checkpoint. Through its interaction with CDKN2A/ARF and MDM2 may induce MDM2-dependent p53/TP53 ubiquitination, stabilization and activation in the nucleus, thereby promoting G1 cell cycle arrest and inhibition of cell proliferation. May also play a role in the rupture of the nuclear envelope during apoptosis. May regulate MAPK14 activity by regulating its dephosphorylation by PPM1D/WIP1. Required for liver development. The sequence is that of CDK5 regulatory subunit-associated protein 3 from Pongo abelii (Sumatran orangutan).